Consider the following 187-residue polypeptide: EP300-interacting inhibitor of differentiation 1 (187 aa).

Residues 1–118 form a disordered region; the sequence is MSEMAELSEL…YDYPEEEQLS (118 aa). Composition is skewed to acidic residues over residues 52–63 and 93–116; these read LEEEGPMEEEEA and FESE…EEEQ. Residues 54–120 are interaction with NR0B2; that stretch reads EEGPMEEEEA…YPEEEQLSGA (67 aa). Positions 178–182 match the LXCXE motif motif; sequence LGCDE.

Interacts via its LXCXE motif with the entire pocket region of RB1. Interacts with EP300, NR0B2 and TRIM27. In terms of processing, ubiquitinated in U2OS osteosarcoma cells and is rapidly degraded by proteasome as cells exit the cell cycle exit. As to expression, widely expressed. Most abundantly expressed in heart, skeletal muscle, pancreas, brain and testis. Expressed at much lower levels in placenta and peripheral blood leukocyte. Barely detectable in lung. Also weakly expressed in lung carcinoma A-549 and various leukemia cell lines.

The protein resides in the nucleus. Its subcellular location is the cytoplasm. Its function is as follows. Interacts with RB1 and EP300 and acts as a repressor of MYOD1 transactivation. Inhibits EP300 and CBP histone acetyltransferase activity. May be involved in coupling cell cycle exit to the transcriptional activation of genes required for cellular differentiation. May act as a candidate coinhibitory factor for NR0B2 that can be directly linked to transcription inhibitory mechanisms. The chain is EP300-interacting inhibitor of differentiation 1 from Homo sapiens (Human).